A 381-amino-acid chain; its full sequence is Chaperone protein DnaJ (381 aa).

The 64-residue stretch at 3-66 (DYYETLGVER…DKRRMYDSGV (64 aa)) folds into the J domain. The segment at 129–211 (GGTAHVKINT…CMGHGRVRTT (83 aa)) adopts a CR-type zinc-finger fold. 8 residues coordinate Zn(2+): cysteine 142, cysteine 145, cysteine 159, cysteine 162, cysteine 185, cysteine 188, cysteine 199, and cysteine 202. CXXCXGXG motif repeat units lie at residues 142 to 149 (CQECGGSG), 159 to 166 (CPDCHGQG), 185 to 192 (CERCEGHG), and 199 to 206 (CPSCMGHG). The tract at residues 355 to 381 (ATHVSQASRPQAGQKKGFFSKLKDALS) is disordered. Over residues 356–365 (THVSQASRPQ) the composition is skewed to polar residues.

Belongs to the DnaJ family. Homodimer. Zn(2+) is required as a cofactor.

The protein localises to the cytoplasm. Functionally, participates actively in the response to hyperosmotic and heat shock by preventing the aggregation of stress-denatured proteins and by disaggregating proteins, also in an autonomous, DnaK-independent fashion. Unfolded proteins bind initially to DnaJ; upon interaction with the DnaJ-bound protein, DnaK hydrolyzes its bound ATP, resulting in the formation of a stable complex. GrpE releases ADP from DnaK; ATP binding to DnaK triggers the release of the substrate protein, thus completing the reaction cycle. Several rounds of ATP-dependent interactions between DnaJ, DnaK and GrpE are required for fully efficient folding. Also involved, together with DnaK and GrpE, in the DNA replication of plasmids through activation of initiation proteins. The chain is Chaperone protein DnaJ from Bifidobacterium longum (strain NCC 2705).